The primary structure comprises 622 residues: Chaperone protein HscA homolog (622 aa).

This sequence belongs to the heat shock protein 70 family.

Functionally, chaperone involved in the maturation of iron-sulfur cluster-containing proteins. Has a low intrinsic ATPase activity which is markedly stimulated by HscB. This is Chaperone protein HscA homolog from Burkholderia orbicola (strain MC0-3).